A 323-amino-acid chain; its full sequence is Flavone synthase cfoJ (323 aa).

The cofactor is FMN.

It functions in the pathway secondary metabolite biosynthesis; flavonoid biosynthesis. Its function is as follows. FMN-dependent oxidoreductase; part of the gene cluster that mediates the biosynthesis of chlorflavonin, a fungal flavonoid with acetolactate synthase inhibitory activity. Within the pathway, cfoJ acts as a flavone synthase (FNS) and catalyzes the formation of a double bond between C2 and C3, converting the flavanone into a flavone. The pathway begins with the PKS-NRPS hybrid synthetase cfoA that uses benzoic acid or p-hydroxybenzoic acid as a starter unit with four rounds of chain elongation using malonyl-CoA to form the chalcone skeleton. Then, a new type of chalcone isomerase, cfoK, catalyzes the conversion of the chalcone into a flavanone by a histidine-mediated oxa-Michael addition mechanism. The desaturation of flavanone to flavone is catalyzed by a new type of flavone synthase, the flavin mononucleotide (FMN)-dependent oxidoreductase cfoJ. Monooxygenases cfoF, cfoG, and P450 cfoH are responsible for the hydroxylation of the flavonoid skeleton at sites C3, C8, and C2', respectively. Like cfoF, the dehydratase cfoI plays also a role in the hydroxylation of position C3. Methyltransferases cfoB, cfoC, and cfoD then catalyze the methylation of C7-OH, C8-OH, and C3-OH, respectively. Finally, the monooxygenase cfoE is responsible for the chlorination of flavonoid at position C3'. In Aspergillus candidus, this protein is Flavone synthase cfoJ.